Reading from the N-terminus, the 862-residue chain is DNA mismatch repair protein MutS (862 aa).

608–615 (GPNMAGKS) provides a ligand contact to ATP.

Belongs to the DNA mismatch repair MutS family.

Its function is as follows. This protein is involved in the repair of mismatches in DNA. It is possible that it carries out the mismatch recognition step. This protein has a weak ATPase activity. This is DNA mismatch repair protein MutS from Borreliella afzelii (strain PKo) (Borrelia afzelii).